A 421-amino-acid polypeptide reads, in one-letter code: Type II methyltransferase M.TaqI (421 aa).

A compositionally biased stretch (low complexity) spans 1-18 (MGLPPLLSLPSNSAPRSL). Residues 1–20 (MGLPPLLSLPSNSAPRSLGR) form a disordered region. Residues threonine 23, 45–48 (EPAC), glutamate 71, aspartate 89, and proline 107 each bind S-adenosyl-L-methionine.

It belongs to the N(4)/N(6)-methyltransferase family.

The catalysed reaction is a 2'-deoxyadenosine in DNA + S-adenosyl-L-methionine = an N(6)-methyl-2'-deoxyadenosine in DNA + S-adenosyl-L-homocysteine + H(+). Its function is as follows. A gamma subtype methylase that recognizes the double-stranded sequence 5'-TCGA-3', methylates A-4 on both strands and protects the DNA from cleavage by the TaqI endonuclease. In Thermus aquaticus, this protein is Type II methyltransferase M.TaqI (taqIM).